The primary structure comprises 480 residues: Glutamyl-tRNA(Gln) amidotransferase subunit A (480 aa).

Catalysis depends on charge relay system residues K74 and S149. S173 (acyl-ester intermediate) is an active-site residue.

Belongs to the amidase family. GatA subfamily. As to quaternary structure, heterotrimer of A, B and C subunits.

It catalyses the reaction L-glutamyl-tRNA(Gln) + L-glutamine + ATP + H2O = L-glutaminyl-tRNA(Gln) + L-glutamate + ADP + phosphate + H(+). Functionally, allows the formation of correctly charged Gln-tRNA(Gln) through the transamidation of misacylated Glu-tRNA(Gln) in organisms which lack glutaminyl-tRNA synthetase. The reaction takes place in the presence of glutamine and ATP through an activated gamma-phospho-Glu-tRNA(Gln). The protein is Glutamyl-tRNA(Gln) amidotransferase subunit A of Vesicomyosocius okutanii subsp. Calyptogena okutanii (strain HA).